Reading from the N-terminus, the 205-residue chain is Beta-crystallin B2 (205 aa).

Alanine 2 is modified (N-acetylalanine). Residues 2 to 16 (ASDHQTQAGKPQPLN) form an N-terminal arm region. 2 Beta/gamma crystallin 'Greek key' domains span residues 17 to 56 (PKIIIFEQENFQGHSHELSGPCPNLKETGVEKAGSVLVQA) and 57 to 101 (GPWV…RPIK). Positions 102-106 (VDSQE) are connecting peptide. Beta/gamma crystallin 'Greek key' domains lie at 107-148 (HKII…RVQS) and 149-191 (GTWV…RRIR). Residues 193–205 (MQWHQRGAFHPSN) are C-terminal arm.

The protein belongs to the beta/gamma-crystallin family. Homo/heterodimer, or complexes of higher-order. The structure of beta-crystallin oligomers seems to be stabilized through interactions between the N-terminal arms.

Crystallins are the dominant structural components of the vertebrate eye lens. The protein is Beta-crystallin B2 (CRYBB2) of Canis lupus familiaris (Dog).